A 338-amino-acid chain; its full sequence is NADPH dehydrogenase (338 aa).

FMN is bound at residue 22–25; it reads SPMC. A substrate-binding site is contributed by Y27. Positions 59 and 101 each coordinate FMN. Position 163–166 (163–166) interacts with substrate; sequence HAAH. Residues R214 and 306–307 each bind FMN; that span reads GR.

It belongs to the NADH:flavin oxidoreductase/NADH oxidase family. NamA subfamily. Homotetramer. FMN is required as a cofactor.

The enzyme catalyses A + NADPH + H(+) = AH2 + NADP(+). In terms of biological role, catalyzes the reduction of the double bond of an array of alpha,beta-unsaturated aldehydes and ketones. It also reduces the nitro group of nitroester and nitroaromatic compounds. It could have a role in detoxification processes. The sequence is that of NADPH dehydrogenase from Listeria welshimeri serovar 6b (strain ATCC 35897 / DSM 20650 / CCUG 15529 / CIP 8149 / NCTC 11857 / SLCC 5334 / V8).